Here is a 101-residue protein sequence, read N- to C-terminus: Small ribosomal subunit protein uS14 (101 aa).

This sequence belongs to the universal ribosomal protein uS14 family. In terms of assembly, part of the 30S ribosomal subunit. Contacts proteins S3 and S10.

Functionally, binds 16S rRNA, required for the assembly of 30S particles and may also be responsible for determining the conformation of the 16S rRNA at the A site. The polypeptide is Small ribosomal subunit protein uS14 (Actinobacillus pleuropneumoniae serotype 5b (strain L20)).